Reading from the N-terminus, the 441-residue chain is Dolichyl-diphosphooligosaccharide--protein glycosyltransferase 48 kDa subunit (441 aa).

An N-terminal signal peptide occupies residues 1 to 28 (MKMVPRLAVRAWPLCGLLLAALGCVCAS). At 29–412 (GPRTLVLLDN…YERFIPSAYP (384 aa)) the chain is on the lumenal side. The helical transmembrane segment at 413-432 (YYASAFSMMAGLFLFSVVFL) threads the bilayer. Topologically, residues 433–441 (HMKEKEKSD) are cytoplasmic.

This sequence belongs to the DDOST 48 kDa subunit family. As to quaternary structure, component of the oligosaccharyltransferase (OST) complex. OST exists in two different complex forms which contain common core subunits RPN1, RPN2, OST48, OST4, DAD1 and TMEM258, either STT3A or STT3B as catalytic subunits, and form-specific accessory subunits. STT3A complex assembly occurs through the formation of 3 subcomplexes. Subcomplex 1 contains RPN1 and TMEM258, subcomplex 2 contains the STT3A-specific subunits STT3A, DC2/OSTC, and KCP2 as well as the core subunit OST4, and subcomplex 3 contains RPN2, DAD1, and OST48. The STT3A complex can form stable complexes with the Sec61 complex or with both the Sec61 and TRAP complexes. Interacts with SMIM22.

The protein localises to the endoplasmic reticulum membrane. It participates in protein modification; protein glycosylation. Subunit of the oligosaccharyl transferase (OST) complex that catalyzes the initial transfer of a defined glycan (Glc(3)Man(9)GlcNAc(2) in eukaryotes) from the lipid carrier dolichol-pyrophosphate to an asparagine residue within an Asn-X-Ser/Thr consensus motif in nascent polypeptide chains, the first step in protein N-glycosylation. N-glycosylation occurs cotranslationally and the complex associates with the Sec61 complex at the channel-forming translocon complex that mediates protein translocation across the endoplasmic reticulum (ER). All subunits are required for a maximal enzyme activity. Required for the assembly of both SST3A- and SS3B-containing OST complexes. This is Dolichyl-diphosphooligosaccharide--protein glycosyltransferase 48 kDa subunit from Rattus norvegicus (Rat).